Consider the following 232-residue polypeptide: NAD(P)H-hydrate epimerase (232 aa).

Residues 9 to 219 enclose the YjeF N-terminal domain; it reads AISVDEELFN…KLQDKYAMEL (211 aa). 62-66 serves as a coordination point for (6S)-NADPHX; it reads NNGGD. Positions 63 and 127 each coordinate K(+). (6S)-NADPHX contacts are provided by residues 131–137 and Asp-160; that span reads GFSFKPP. Position 163 (Ser-163) interacts with K(+).

This sequence belongs to the NnrE/AIBP family. It depends on K(+) as a cofactor.

It carries out the reaction (6R)-NADHX = (6S)-NADHX. The enzyme catalyses (6R)-NADPHX = (6S)-NADPHX. In terms of biological role, catalyzes the epimerization of the S- and R-forms of NAD(P)HX, a damaged form of NAD(P)H that is a result of enzymatic or heat-dependent hydration. This is a prerequisite for the S-specific NAD(P)H-hydrate dehydratase to allow the repair of both epimers of NAD(P)HX. The polypeptide is NAD(P)H-hydrate epimerase (Aedes aegypti (Yellowfever mosquito)).